The primary structure comprises 331 residues: N-arachidonyl glycine receptor (331 aa).

The Extracellular segment spans residues 1–26 (MITLNNQDQPVPFNNSYPDEYEIAAL). N-linked (GlcNAc...) asparagine glycosylation occurs at asparagine 14. A helical transmembrane segment spans residues 27–47 (VFYSCIFIIGLFVNITALWVF). Residues 48–56 (SCTTKKRTT) lie on the Cytoplasmic side of the membrane. A helical transmembrane segment spans residues 57–77 (VTIYMMNVALVDLIFIMTLPF). Over 78 to 95 (RMFYYAKDEWPFGEYFCQ) the chain is Extracellular. A disulfide bridge connects residues cysteine 94 and cysteine 172. A helical transmembrane segment spans residues 96-116 (ILGALTVFYPSIALWLLAFIS). The Cytoplasmic segment spans residues 117–138 (ADRYMAIVQPKYAKELKNTCKA). The helical transmembrane segment at 139–159 (VLACVGVWIMTLTTTIPLLLL) threads the bilayer. Topologically, residues 160 to 191 (HKDPDKDSTPATCLKISDIVYLKAVNVLNFTR) are extracellular. Asparagine 188 carries an N-linked (GlcNAc...) asparagine glycan. Residues 192–212 (LTFFFLIPLFIMIGCYLVIIH) form a helical membrane-spanning segment. Residues 213–232 (NLLHGRTSKLKPKVKEKSIR) lie on the Cytoplasmic side of the membrane. A helical membrane pass occupies residues 233-253 (IIITLLVQVLVCFMPFHICFA). Topologically, residues 254 to 268 (FLMLGTGENSYSPWG) are extracellular. A helical transmembrane segment spans residues 269–289 (AFTTFLMNLSTCLDVILYYIV). Residues 290-331 (SKQFQARVISVMLYRNYLRGMRRKSFRSGSLRSLSNINSEML) lie on the Cytoplasmic side of the membrane. Serine 322 bears the Phosphoserine mark.

It belongs to the G-protein coupled receptor 1 family.

It localises to the cell membrane. The protein resides in the cytoplasmic vesicle membrane. In terms of biological role, g protein-coupled receptor (GPCR) that plays a role in diverse physiological processes particularly within the immune and nervous systems. Becomes active when triggered by various endogenous ligands including endocannabinoid N-arachidonyl glycine (NAGly), delta-9-tetrahydrocannabinol or resolvin D2/RvD2 derived from the omega-3 fatty acid docosahexaenoic acid (DHA). Upon RvD2 binding, facilitates the resolution of inflammation, aiding in tissue repair and homeostasis. Mechanistically, RvD2 ligation initiates Galphas protein coupling, activation of cAMP-PKA signaling pathway and phosphorylation of STAT3, leading to RvD2-stimulated macrophage phagocytosis. Mediates NAGly-induced process of reorganization of actin filaments and induction of acrosomal exocytosis. Activation by N-arachidonoyl glycine (NAGly) can also induce apoptosis in macrophages. Plays a role in homeostasis of CD8+ subsets of intraepithelial lymphocytes (IELs) (CD8alphaalpha and CD8alphabeta IELs) in small intestine by supporting preferential migration of CD8alphaalpha T-cells to intraepithelial compartment over lamina propria compartment, and by mediating their reconstitution into small intestine after bone marrow transplant. Participates also in hypotensive responses, mediating reduction in intraocular and blood pressure. This Macaca fascicularis (Crab-eating macaque) protein is N-arachidonyl glycine receptor.